Here is a 252-residue protein sequence, read N- to C-terminus: Triosephosphate isomerase (252 aa).

10–12 (NWK) is a binding site for substrate. The Electrophile role is filled by H96. Residue E168 is the Proton acceptor of the active site. Substrate-binding positions include G174, S214, and 235-236 (GG).

Belongs to the triosephosphate isomerase family. As to quaternary structure, homodimer.

It localises to the cytoplasm. It carries out the reaction D-glyceraldehyde 3-phosphate = dihydroxyacetone phosphate. It functions in the pathway carbohydrate biosynthesis; gluconeogenesis. It participates in carbohydrate degradation; glycolysis; D-glyceraldehyde 3-phosphate from glycerone phosphate: step 1/1. In terms of biological role, involved in the gluconeogenesis. Catalyzes stereospecifically the conversion of dihydroxyacetone phosphate (DHAP) to D-glyceraldehyde-3-phosphate (G3P). The polypeptide is Triosephosphate isomerase (Lactococcus lactis subsp. lactis (strain IL1403) (Streptococcus lactis)).